Reading from the N-terminus, the 459-residue chain is Glutamyl-tRNA reductase (459 aa).

Substrate contacts are provided by residues 49 to 52, S109, 114 to 116, and Q120; these read TCNR and ETQ. C50 functions as the Nucleophile in the catalytic mechanism. Residue 189–194 coordinates NADP(+); that stretch reads GAGKMG.

This sequence belongs to the glutamyl-tRNA reductase family. As to quaternary structure, homodimer.

It carries out the reaction (S)-4-amino-5-oxopentanoate + tRNA(Glu) + NADP(+) = L-glutamyl-tRNA(Glu) + NADPH + H(+). It participates in porphyrin-containing compound metabolism; protoporphyrin-IX biosynthesis; 5-aminolevulinate from L-glutamyl-tRNA(Glu): step 1/2. Its function is as follows. Catalyzes the NADPH-dependent reduction of glutamyl-tRNA(Glu) to glutamate 1-semialdehyde (GSA). The polypeptide is Glutamyl-tRNA reductase (Halalkalibacterium halodurans (strain ATCC BAA-125 / DSM 18197 / FERM 7344 / JCM 9153 / C-125) (Bacillus halodurans)).